The sequence spans 1456 residues: Leucine-rich repeat-containing protein 9 (1456 aa).

LRR repeat units lie at residues 53 to 78 (FHNL…CLQL), 97 to 119 (CRNL…LEKL), 120 to 141 (IKLE…LQTL), 142 to 164 (KNLK…LDPN), 166 to 188 (QLEK…NLTK), 190 to 212 (TRLK…QLCN), 224 to 248 (LQRL…AMKK), and 264 to 287 (NEEL…RIKL). The interval 305 to 325 (SSKGQSDTTPEAEKPRNSEVV) is disordered. One copy of the LRR 9 repeat lies at 339–362 (LSALDDRVTFWNKKLHEIEAIYRT). Tyrosine 525 is subject to Phosphotyrosine. LRR repeat units lie at residues 661–683 (KPRP…TNIY), 684–705 (SHIV…LAKL), 706–727 (TGLR…VYHL), 729–748 (NLEY…GFRG), 749–772 (LMKL…INVL), 776–802 (TTSL…VIGR), 806–833 (LTHL…KITQ), 876–898 (YSKI…LEKL), 899–920 (ENLK…LESC), 921–942 (VNLE…ITRL), 943–965 (TKLS…TFDN), 967–991 (LHLH…TFTL), 993–1010 (ELYI…IYNL), 1013–1037 (LCNL…RFFV), 1082–1105 (FIQM…PVDH), 1106–1128 (FRNV…LIYL), 1129–1151 (PNVK…LKPQ), 1191–1214 (MQSL…QLNR), 1215–1237 (LRNL…LDNL), 1238–1260 (IVLQ…AFSK), 1262–1283 (SSLL…LQSL), 1284–1307 (VKLE…KLDV), and 1309–1335 (PSLR…IFRL).

This chain is Leucine-rich repeat-containing protein 9 (Lrrc9), found in Mus musculus (Mouse).